Consider the following 361-residue polypeptide: D-alanine--D-alanine ligase (361 aa).

Residues 144-350 (KLCVSEAGIA…FPELCDRLLQ (207 aa)) form the ATP-grasp domain. An ATP-binding site is contributed by 177–232 (PETLIYPVFVKPAHLGSSVGISKVSVQGELPEALAHACNLDTKVLIEQAMHGKEIE). Positions 303, 317, and 319 each coordinate Mg(2+).

It belongs to the D-alanine--D-alanine ligase family. Mg(2+) is required as a cofactor. Requires Mn(2+) as cofactor.

It localises to the cytoplasm. The enzyme catalyses 2 D-alanine + ATP = D-alanyl-D-alanine + ADP + phosphate + H(+). Its pathway is cell wall biogenesis; peptidoglycan biosynthesis. Cell wall formation. In Chlorobium phaeovibrioides (strain DSM 265 / 1930) (Prosthecochloris vibrioformis (strain DSM 265)), this protein is D-alanine--D-alanine ligase.